A 149-amino-acid chain; its full sequence is Glucosamine 6-phosphate N-acetyltransferase (149 aa).

Positions Phe5 to Asp149 constitute an N-acetyltransferase domain. Substrate is bound by residues Thr27, Lys75 to Arg78, and Glu87 to Val89. Gly97–Lys102 contacts acetyl-CoA. Tyr118–Lys119 lines the substrate pocket. Acetyl-CoA is bound at residue Tyr132–Lys134.

The protein belongs to the acetyltransferase family. GNA1 subfamily. In terms of assembly, homodimer. Expressed in roots, leaves, stems, cauline leaves, flowers and siliques.

The protein resides in the endoplasmic reticulum membrane. It carries out the reaction D-glucosamine 6-phosphate + acetyl-CoA = N-acetyl-D-glucosamine 6-phosphate + CoA + H(+). It participates in nucleotide-sugar biosynthesis; UDP-N-acetyl-alpha-D-glucosamine biosynthesis; N-acetyl-alpha-D-glucosamine 1-phosphate from alpha-D-glucosamine 6-phosphate (route I): step 1/2. Functionally, acetyltransferase involved in UDP-N-acetylglucosamine (UDP-GlcNAc) biosynthesis. UDP-GlcNAc is an essential metabolite that serves as an initial sugar donor for N-glycan synthesis and thus plays an important role in protein and lipid glycosylation. The polypeptide is Glucosamine 6-phosphate N-acetyltransferase (GNA1) (Arabidopsis thaliana (Mouse-ear cress)).